A 158-amino-acid chain; its full sequence is D-aminoacyl-tRNA deacylase (158 aa).

Residues 144 to 145 (GP) carry the Gly-cisPro motif, important for rejection of L-amino acids motif.

The protein belongs to the DTD family. Homodimer.

The protein resides in the cytoplasm. The catalysed reaction is glycyl-tRNA(Ala) + H2O = tRNA(Ala) + glycine + H(+). The enzyme catalyses a D-aminoacyl-tRNA + H2O = a tRNA + a D-alpha-amino acid + H(+). Functionally, an aminoacyl-tRNA editing enzyme that deacylates mischarged D-aminoacyl-tRNAs. Also deacylates mischarged glycyl-tRNA(Ala), protecting cells against glycine mischarging by AlaRS. Acts via tRNA-based rather than protein-based catalysis; rejects L-amino acids rather than detecting D-amino acids in the active site. By recycling D-aminoacyl-tRNA to D-amino acids and free tRNA molecules, this enzyme counteracts the toxicity associated with the formation of D-aminoacyl-tRNA entities in vivo and helps enforce protein L-homochirality. The chain is D-aminoacyl-tRNA deacylase from Corynebacterium kroppenstedtii (strain DSM 44385 / JCM 11950 / CIP 105744 / CCUG 35717).